The chain runs to 141 residues: Chorion protein S16 (141 aa).

Positions 1–22 (MSANNMRLLCLLLACYISAIVA) are cleaved as a signal peptide.

This sequence belongs to the chorion protein S16 family.

The protein localises to the secreted. Its function is as follows. Chorion membrane (egg shell) protein; plays a role in protecting the egg from the environment. This is Chorion protein S16 (Cp16) from Drosophila subobscura (Fruit fly).